Here is a 132-residue protein sequence, read N- to C-terminus: Small ribosomal subunit protein uS8 (132 aa).

Belongs to the universal ribosomal protein uS8 family. In terms of assembly, part of the 30S ribosomal subunit. Contacts proteins S5 and S12.

One of the primary rRNA binding proteins, it binds directly to 16S rRNA central domain where it helps coordinate assembly of the platform of the 30S subunit. The chain is Small ribosomal subunit protein uS8 from Streptococcus gordonii (strain Challis / ATCC 35105 / BCRC 15272 / CH1 / DL1 / V288).